A 124-amino-acid chain; its full sequence is Outer dense fiber protein 2 (124 aa).

Residues 13-124 (KEDSERLMEQ…EAIMEQLKEL (112 aa)) are a coiled coil.

It belongs to the ODF2 family. As to quaternary structure, self-associates. Associates with microtubules and forms a fibrillar structure partially linked to the microtubule network. Interacts through its C-terminus with PLK1. Interacts with ODF1. Interacts with MARK4; the interaction is required for localization of ODF2 to centrioles. Interacts with TSSK4. Interacts with AKNA. Interacts with QRICH2. Interacts with CFAP58. Interacts with BBOF1. Interacts with CCDC38. Interacts with CCDC42. Post-translationally, tyrosine phosphorylated. As to expression, detected in sperm flagella (at protein level).

It is found in the cytoplasm. It localises to the cytoskeleton. Its subcellular location is the microtubule organizing center. The protein resides in the centrosome. The protein localises to the cell projection. It is found in the cilium. It localises to the centriole. Its subcellular location is the spindle pole. The protein resides in the flagellum. Functionally, seems to be a major component of sperm tail outer dense fibers (ODF). ODFs are filamentous structures located on the outside of the axoneme in the midpiece and principal piece of the mammalian sperm tail and may help to maintain the passive elastic structures and elastic recoil of the sperm tail. May have a modulating influence on sperm motility. Functions as a general scaffold protein that is specifically localized at the distal/subdistal appendages of mother centrioles. Component of the centrosome matrix required for the localization of PLK1 and NIN to the centrosomes. Required for the formation and/or maintenance of normal CETN1 assembly. The sequence is that of Outer dense fiber protein 2 from Mesocricetus auratus (Golden hamster).